A 207-amino-acid polypeptide reads, in one-letter code: 2,3-bisphosphoglycerate-dependent phosphoglycerate mutase (207 aa).

Residues 10 to 17, 23 to 24, Arg62, 89 to 92, Lys100, 116 to 117, and 160 to 161 each bind substrate; these read RHGQSEWN, TG, ERDY, RR, and GN. The Tele-phosphohistidine intermediate role is filled by His11. The Proton donor/acceptor role is filled by Glu89.

The protein belongs to the phosphoglycerate mutase family. BPG-dependent PGAM subfamily. As to quaternary structure, homodimer.

It catalyses the reaction (2R)-2-phosphoglycerate = (2R)-3-phosphoglycerate. The protein operates within carbohydrate degradation; glycolysis; pyruvate from D-glyceraldehyde 3-phosphate: step 3/5. Functionally, catalyzes the interconversion of 2-phosphoglycerate and 3-phosphoglycerate. The polypeptide is 2,3-bisphosphoglycerate-dependent phosphoglycerate mutase (Xanthobacter autotrophicus (strain ATCC BAA-1158 / Py2)).